Here is a 300-residue protein sequence, read N- to C-terminus: Ribosomal protein bS6--L-glutamate ligase (300 aa).

The ATP-grasp domain occupies 104–287; sequence MQLLARQGID…IASKMIRWIE (184 aa). ATP is bound by residues Lys-141, 178 to 179, Asp-187, and 211 to 213; these read EY and RSN. Mg(2+) contacts are provided by Asp-248, Glu-260, and Asn-262. Residues Asp-248, Glu-260, and Asn-262 each coordinate Mn(2+).

This sequence belongs to the RimK family. Mg(2+) serves as cofactor. Mn(2+) is required as a cofactor.

Its function is as follows. An L-glutamate ligase that catalyzes the ATP-dependent post-translational addition of glutamate residues to the C-terminus of ribosomal protein bS6 (RpsF). Is also able to catalyze the synthesis of poly-alpha-glutamate in vitro, via ATP hydrolysis from unprotected glutamate as substrate. The number of glutamate residues added to either RpsF or to poly-alpha-glutamate changes with pH. The polypeptide is Ribosomal protein bS6--L-glutamate ligase (Escherichia coli O81 (strain ED1a)).